A 405-amino-acid polypeptide reads, in one-letter code: MKILIINSGSSSIKFQLIDMSDESVLASGLVERIGETDTTEKNINCTFHPGTDKKHKIEICQTVADHRQGMLAAIELLGDKEQAVMSDLSEIDAVGHRIVHGGETMYQPVVVDEKVIAEITAAIPLAPLHNPGHLDGIKVAQELFTEVPHVTVFDTAFFQTIPPHAHIYALPYELYTKHRIRRYGAHGTSHKFVTNECAKLLEKPVEECNLITVHLGNGSSMSAVEGGKAIDTSMGVTPLEGLVMGTRSGDIDPAIMAFLNRNLGMSIEEIDHMLNKESGLKGICGMNDMRDIHAAADAGNELAELAVGIQTYRIRKYIGSYMAALGQVDAIVFTAGIGENDDIVRAKSLEKLENLGVILDKKLNAQRSKEPFCISTPESKIQVWVIPTNEELAIARETKAVVNA.

Position 7 (asparagine 7) interacts with Mg(2+). Lysine 14 lines the ATP pocket. Arginine 98 provides a ligand contact to substrate. Aspartate 155 acts as the Proton donor/acceptor in catalysis. ATP-binding positions include 215–219 (HLGNG), 289–291 (DMR), and 337–341 (GIGEN). Glutamate 391 contributes to the Mg(2+) binding site.

Belongs to the acetokinase family. In terms of assembly, homodimer. Mg(2+) serves as cofactor. It depends on Mn(2+) as a cofactor.

Its subcellular location is the cytoplasm. The catalysed reaction is acetate + ATP = acetyl phosphate + ADP. It participates in metabolic intermediate biosynthesis; acetyl-CoA biosynthesis; acetyl-CoA from acetate: step 1/2. Catalyzes the formation of acetyl phosphate from acetate and ATP. Can also catalyze the reverse reaction. In Desulfotalea psychrophila (strain LSv54 / DSM 12343), this protein is Acetate kinase.